A 1533-amino-acid chain; its full sequence is Glycogen debranching enzyme (1533 aa).

Ser64 carries the post-translational modification Phosphoserine. Residues Asp527, His530, and Asp628 contribute to the active site.

The protein belongs to the glycogen debranching enzyme family. Monomer. Interacts with NHLRC1/malin. In terms of processing, ubiquitinated.

It localises to the cytoplasm. The catalysed reaction is Transfers a segment of a (1-&gt;4)-alpha-D-glucan to a new position in an acceptor, which may be glucose or a (1-&gt;4)-alpha-D-glucan.. It catalyses the reaction Hydrolysis of (1-&gt;6)-alpha-D-glucosidic branch linkages in glycogen phosphorylase limit dextrin.. In terms of biological role, multifunctional enzyme acting as 1,4-alpha-D-glucan:1,4-alpha-D-glucan 4-alpha-D-glycosyltransferase and amylo-1,6-glucosidase in glycogen degradation. In Canis lupus familiaris (Dog), this protein is Glycogen debranching enzyme (AGL).